A 225-amino-acid chain; its full sequence is 7-cyano-7-deazaguanine synthase (225 aa).

10-20 serves as a coordination point for ATP; it reads VSGGLDSTTVI. Residues Cys-189, Cys-199, Cys-202, and Cys-205 each coordinate Zn(2+).

This sequence belongs to the QueC family. It depends on Zn(2+) as a cofactor.

It catalyses the reaction 7-carboxy-7-deazaguanine + NH4(+) + ATP = 7-cyano-7-deazaguanine + ADP + phosphate + H2O + H(+). It functions in the pathway purine metabolism; 7-cyano-7-deazaguanine biosynthesis. In terms of biological role, catalyzes the ATP-dependent conversion of 7-carboxy-7-deazaguanine (CDG) to 7-cyano-7-deazaguanine (preQ(0)). This is 7-cyano-7-deazaguanine synthase from Cellvibrio japonicus (strain Ueda107) (Pseudomonas fluorescens subsp. cellulosa).